The chain runs to 617 residues: V-type proton ATPase catalytic subunit A (617 aa).

ATP is bound at residue 250–257 (GAFGCGKT). Position 384 is a phosphoserine; by AMPK (Ser-384).

The protein belongs to the ATPase alpha/beta chains family. In terms of assembly, V-ATPase is a heteromultimeric enzyme made up of two complexes: the ATP-hydrolytic V1 complex and the proton translocation V0 complex. The V1 complex consists of three catalytic AB heterodimers that form a heterohexamer, three peripheral stalks each consisting of EG heterodimers, one central rotor including subunits D and F, and the regulatory subunits C and H. The proton translocation complex V0 consists of the proton transport subunit a, a ring of proteolipid subunits c9c'', rotary subunit d, subunits e and f, and the accessory subunits ATP6AP1/Ac45 and ATP6AP2/PRR. Interacts with the V0 complex V-ATPase subunit a4 ATP6V0A4. Interacts with WFS1. Interacts with alpha-crystallin B chain/CRYAB and with MTOR, forming a ternary complex. Phosphorylation at Ser-384 by AMPK down-regulates its enzyme activity.

The protein resides in the cytoplasm. It is found in the cytosol. The protein localises to the cytoplasmic vesicle. It localises to the secretory vesicle. Its subcellular location is the clathrin-coated vesicle membrane. The protein resides in the lysosome. The enzyme catalyses ATP + H2O + 4 H(+)(in) = ADP + phosphate + 5 H(+)(out). Its activity is regulated as follows. ATP hydrolysis occurs at the interface between the nucleotide-binding domains of subunits A and B. ATP hydrolysis triggers a conformational change in the subunits D and F, which induces a shift of subunit d. The c-ring is subsequently rotated and results in a continuous proton translocation across the membrane. Catalytic subunit of the V1 complex of vacuolar(H+)-ATPase (V-ATPase), a multisubunit enzyme composed of a peripheral complex (V1) that hydrolyzes ATP and a membrane integral complex (V0) that translocates protons. V-ATPase is responsible for acidifying and maintaining the pH of intracellular compartments and in some cell types, is targeted to the plasma membrane, where it is responsible for acidifying the extracellular environment. In aerobic conditions, involved in intracellular iron homeostasis, thus triggering the activity of Fe(2+) prolyl hydroxylase (PHD) enzymes, and leading to HIF1A hydroxylation and subsequent proteasomal degradation. May play a role in neurite development and synaptic connectivity. In Mus musculus (Mouse), this protein is V-type proton ATPase catalytic subunit A (Atp6v1a).